Here is a 323-residue protein sequence, read N- to C-terminus: Methionyl-tRNA formyltransferase (323 aa).

117–120 (SLLP) lines the (6S)-5,6,7,8-tetrahydrofolate pocket.

Belongs to the Fmt family.

The catalysed reaction is L-methionyl-tRNA(fMet) + (6R)-10-formyltetrahydrofolate = N-formyl-L-methionyl-tRNA(fMet) + (6S)-5,6,7,8-tetrahydrofolate + H(+). Its function is as follows. Attaches a formyl group to the free amino group of methionyl-tRNA(fMet). The formyl group appears to play a dual role in the initiator identity of N-formylmethionyl-tRNA by promoting its recognition by IF2 and preventing the misappropriation of this tRNA by the elongation apparatus. The sequence is that of Methionyl-tRNA formyltransferase from Albidiferax ferrireducens (strain ATCC BAA-621 / DSM 15236 / T118) (Rhodoferax ferrireducens).